The following is a 572-amino-acid chain: Glypican-5 (572 aa).

Residues 1 to 24 form the signal peptide; it reads MDAQTWPVGFRCLLLLALVGSARS. N-linked (GlcNAc...) asparagine glycosylation is found at asparagine 120 and asparagine 237. Residues 355-375 are disordered; it reads SPRCSFDQSKEKHGMKTTTRN. 5 O-linked (Xyl...) (glycosaminoglycan) serine glycosylation sites follow: serine 441, serine 486, serine 495, serine 507, and serine 509. An N-linked (GlcNAc...) asparagine glycan is attached at asparagine 527.

This sequence belongs to the glypican family. As to expression, in adult, primarily expressed in the brain. Also detected in fetal brain, lung and liver.

The protein localises to the cell membrane. Its subcellular location is the secreted. The protein resides in the extracellular space. Cell surface proteoglycan that bears heparan sulfate. The protein is Glypican-5 (GPC5) of Homo sapiens (Human).